A 151-amino-acid polypeptide reads, in one-letter code: MSEAAVEKIEGYVASVLQSMDVELVDIQFRCEGHGWVLRLFIDVEGGVTLDLCAQVSREVGQYLDVEDVIEQAYHLEVSSPGVERPLKSLANFERFAGKKARIKLHEPLNGEKTFEGIIGPVEDGEVSLLVDGKIAVKCGIEQLNKARLVL.

This sequence belongs to the RimP family.

The protein localises to the cytoplasm. Its function is as follows. Required for maturation of 30S ribosomal subunits. In Desulfotalea psychrophila (strain LSv54 / DSM 12343), this protein is Ribosome maturation factor RimP.